Reading from the N-terminus, the 275-residue chain is Apoptosis inhibitor 1 (275 aa).

2 BIR repeats span residues 24-91 and 126-193; these read LIER…CVYA and PSAR…CYFV. C163, C166, H183, and C190 together coordinate Zn(2+). The RING-type zinc-finger motif lies at 227 to 263; it reads CKVCLERQRDAVLLPCRHFCVCMQCYFALDGKCPTCR.

Its function is as follows. Acts by blocking cellular apoptosis rather than by preventing viral stimulation of apoptosis. The sequence is that of Apoptosis inhibitor 1 (IAP1) from Orgyia pseudotsugata (Douglas-fir tussock moth).